We begin with the raw amino-acid sequence, 353 residues long: uncharacterized protein (353 aa).

Positions 212, 223, 287, 316, and 330 each coordinate Mn(2+).

The protein belongs to the peptidase M24B family. Requires Mn(2+) as cofactor.

This is an uncharacterized protein from Bacillus subtilis (strain 168).